We begin with the raw amino-acid sequence, 207 residues long: Small ribosomal subunit protein uS4 (207 aa).

Positions Lys-31–Asn-54 are disordered. The span at Gly-42 to Gly-53 shows a compositional bias: polar residues. Residues Ser-97–Leu-160 form the S4 RNA-binding domain.

The protein belongs to the universal ribosomal protein uS4 family. Part of the 30S ribosomal subunit. Contacts protein S5. The interaction surface between S4 and S5 is involved in control of translational fidelity.

One of the primary rRNA binding proteins, it binds directly to 16S rRNA where it nucleates assembly of the body of the 30S subunit. Its function is as follows. With S5 and S12 plays an important role in translational accuracy. The protein is Small ribosomal subunit protein uS4 of Cupriavidus metallidurans (strain ATCC 43123 / DSM 2839 / NBRC 102507 / CH34) (Ralstonia metallidurans).